Here is a 592-residue protein sequence, read N- to C-terminus: Peroxisomal targeting signal receptor (592 aa).

Cysteine 10 participates in a covalent cross-link: Glycyl cysteine thioester (Cys-Gly) (interchain with G-Cter in ubiquitin). An amphipathic helix 1 (AH1) region spans residues 11–33 (SVNGNAVAQFNKHTQQDRSLQQQ). Residue lysine 22 forms a Glycyl lysine isopeptide (Lys-Gly) (interchain with G-Cter in ubiquitin) linkage. The segment covering 22-46 (KHTQQDRSLQQQVANQHGNVAQNQG) has biased composition (polar residues). The disordered stretch occupies residues 22–49 (KHTQQDRSLQQQVANQHGNVAQNQGFKK). An amphipathic helix 2 (AH2) region spans residues 58–76 (RANLDQFMNNGAPQNSFQF). 3 short sequence motifs (wxxxF/Y motif) span residues 100–104 (WSQDF), 128–132 (WASEF), and 185–189 (WENQF). Positions 223–239 (FQEVWDSLNSESFENDF) are amphipathic helix 4 (AH4). Positions 262 to 266 (WEKDF) match the WxxxF/Y motif 4 motif. 5 TPR repeats span residues 295 to 329 (DQDPYEIGLQLMENGAKLSEAALAFEAAIQRDENH), 330 to 363 (VDAWLKLGEVQTQNEKEIAGISALEKCLELHPEN), 440 to 473 (ADVQMGLGVLFYANEEFDKTIDCFKAALSIRPDD), 475 to 507 (ILWNRLGASLANSNRSEEAVDAYFKALQLKPTF), and 509 to 541 (RARYNLGVSCINIGCYKEAAEHLLSGLSMHQVE).

The protein belongs to the peroxisomal targeting signal receptor family. As to quaternary structure, interacts (via WxxxF/Y and LVxEF motifs) with PEX14; promoting translocation through the PEX13-PEX14 docking complex. Post-translationally, monoubiquitinated at Cys-10 by PEX2 during PEX5 passage through the retrotranslocation channel: monoubiquitination acts as a signal for PEX5 extraction and is required for proper export from peroxisomes and recycling. When PEX5 recycling is compromised, polyubiquitinated at Lys-22 by PEX10 during its passage through the retrotranslocation channel, leading to its degradation.

The protein localises to the cytoplasm. It localises to the cytosol. Its subcellular location is the peroxisome matrix. Its function is as follows. Receptor that mediates peroxisomal import of proteins containing a C-terminal PTS1-type tripeptide peroxisomal targeting signal (SKL-type). Binds to cargo proteins containing a PTS1 peroxisomal targeting signal in the cytosol, and translocates them into the peroxisome matrix by passing through the PEX13-PEX14 docking complex along with cargo proteins. PEX5 receptor is then retrotranslocated into the cytosol, leading to release of bound cargo in the peroxisome matrix, and reset for a subsequent peroxisome import cycle. The protein is Peroxisomal targeting signal receptor (PEX5) of Candida albicans (strain SC5314 / ATCC MYA-2876) (Yeast).